Reading from the N-terminus, the 741-residue chain is D-(-)-3-hydroxybutyrate oligomer hydrolase (741 aa).

Residues 1-23 form the signal peptide; the sequence is MKTIQGKSPGRWYSRGMLLAAMA. The segment at 45–68 is disordered; sequence NGNAGGNGNNNGNNNGNTVSNTKP. Catalysis depends on Ser338, which acts as the Charge relay system.

It belongs to the D-(-)-3-hydroxybutyrate oligomer hydrolase family.

The protein resides in the secreted. The catalysed reaction is (3R)-hydroxybutanoate dimer + H2O = 2 (R)-3-hydroxybutanoate + H(+). It participates in lipid metabolism; butanoate metabolism. In terms of biological role, participates in the degradation of poly-3-hydroxybutyrate (PHB). It works downstream of poly(3-hydroxybutyrate) depolymerase, hydrolyzing D(-)-3-hydroxybutyrate oligomers of various length (3HB-oligomers) into 3HB-monomers. The polypeptide is D-(-)-3-hydroxybutyrate oligomer hydrolase (Ralstonia pickettii (Burkholderia pickettii)).